The following is a 98-amino-acid chain: YcgL domain-containing protein CJA_2437 (98 aa).

A YcgL domain is found at 3-87 (IIAEIYRSPK…RDLVDAEAKR (85 aa)).

This is YcgL domain-containing protein CJA_2437 from Cellvibrio japonicus (strain Ueda107) (Pseudomonas fluorescens subsp. cellulosa).